A 557-amino-acid chain; its full sequence is Glucose-6-phosphate isomerase (557 aa).

Alanine 2 carries the post-translational modification N-acetylalanine. Lysine 12 bears the N6-acetyllysine mark. Position 107 is a phosphoserine (serine 107). At lysine 142 the chain carries N6-acetyllysine. Glycine 159–serine 160 serves as a coordination point for D-glucose 6-phosphate. Phosphoserine; by CK2 is present on serine 185. Serine 210–threonine 215 provides a ligand contact to D-glucose 6-phosphate. Threonine 250 is subject to Phosphothreonine. The D-glucose 6-phosphate site is built by glutamine 354, glutamate 358, and histidine 389. Residue glutamate 358 is the Proton donor of the active site. Histidine 389 is a catalytic residue. Serine 455 is modified (phosphoserine). Lysine 519 lines the D-glucose 6-phosphate pocket. The active site involves lysine 519.

The protein belongs to the GPI family. Homodimer; in the catalytically active form. Monomer in the secreted form. Phosphorylation at Ser-185 by CK2 has been shown to decrease enzymatic activity and may contribute to secretion by a non-classical secretory pathway. Post-translationally, ISGylated.

The protein resides in the cytoplasm. It localises to the secreted. It carries out the reaction alpha-D-glucose 6-phosphate = beta-D-fructose 6-phosphate. It functions in the pathway carbohydrate degradation; glycolysis; D-glyceraldehyde 3-phosphate and glycerone phosphate from D-glucose: step 2/4. Its function is as follows. In the cytoplasm, catalyzes the conversion of glucose-6-phosphate to fructose-6-phosphate, the second step in glycolysis, and the reverse reaction during gluconeogenesis. Besides it's role as a glycolytic enzyme, also acts as a secreted cytokine: acts as an angiogenic factor (AMF) that stimulates endothelial cell motility. Acts as a neurotrophic factor, neuroleukin, for spinal and sensory neurons. It is secreted by lectin-stimulated T-cells and induces immunoglobulin secretion. The polypeptide is Glucose-6-phosphate isomerase (Bos taurus (Bovine)).